The following is a 92-amino-acid chain: Small ribosomal subunit protein uS17 (92 aa).

It belongs to the universal ribosomal protein uS17 family. In terms of assembly, part of the 30S ribosomal subunit.

Functionally, one of the primary rRNA binding proteins, it binds specifically to the 5'-end of 16S ribosomal RNA. The polypeptide is Small ribosomal subunit protein uS17 (Mycoplasma mobile (strain ATCC 43663 / 163K / NCTC 11711) (Mesomycoplasma mobile)).